The chain runs to 149 residues: Nucleoside diphosphate kinase 1 (149 aa).

The ATP site is built by K10, F58, R86, T92, R103, and N113. The Pros-phosphohistidine intermediate role is filled by H116.

It belongs to the NDK family. Mg(2+) is required as a cofactor.

It carries out the reaction a 2'-deoxyribonucleoside 5'-diphosphate + ATP = a 2'-deoxyribonucleoside 5'-triphosphate + ADP. The enzyme catalyses a ribonucleoside 5'-diphosphate + ATP = a ribonucleoside 5'-triphosphate + ADP. Functionally, major role in the synthesis of nucleoside triphosphates other than ATP. The ATP gamma phosphate is transferred to the NDP beta phosphate via a ping-pong mechanism, using a phosphorylated active-site intermediate. This NDK is microtubule-associated. The chain is Nucleoside diphosphate kinase 1 (NDPK1) from Pisum sativum (Garden pea).